Reading from the N-terminus, the 380-residue chain is Cytochrome b (380 aa).

Helical transmembrane passes span 34-54 (FGSL…LLAT), 78-99 (WLIR…YLHI), 114-134 (WNTG…GYVL), and 179-199 (FFAL…IHLA). Heme b is bound by residues His84 and His98. Heme b-binding residues include His183 and His197. His202 provides a ligand contact to a ubiquinone. The next 4 helical transmembrane spans lie at 227 to 247 (LKDI…ALFS), 289 to 309 (LGGV…PFLH), 321 to 341 (LSQI…WIGS), and 348 to 368 (FIII…ILFP).

The protein belongs to the cytochrome b family. The cytochrome bc1 complex contains 11 subunits: 3 respiratory subunits (MT-CYB, CYC1 and UQCRFS1), 2 core proteins (UQCRC1 and UQCRC2) and 6 low-molecular weight proteins (UQCRH/QCR6, UQCRB/QCR7, UQCRQ/QCR8, UQCR10/QCR9, UQCR11/QCR10 and a cleavage product of UQCRFS1). This cytochrome bc1 complex then forms a dimer. It depends on heme b as a cofactor.

It localises to the mitochondrion inner membrane. Component of the ubiquinol-cytochrome c reductase complex (complex III or cytochrome b-c1 complex) that is part of the mitochondrial respiratory chain. The b-c1 complex mediates electron transfer from ubiquinol to cytochrome c. Contributes to the generation of a proton gradient across the mitochondrial membrane that is then used for ATP synthesis. This is Cytochrome b (MT-CYB) from Callipepla gambelii (Gambel's quail).